Here is a 589-residue protein sequence, read N- to C-terminus: MRSMKAIIEYLLKQALINLQQSGEMPIDLEIEIKVENAKDPAHGDYATNLALVLAKPCRQAPKVLAERLVAVIPVDPSVEKIEIAGAGFINFFMRSTARSLIISEILNKGKEFGRGNLGQSQKVLIEFVSANPTGPLHVGHGRGAAFGATLGNVLKAAGYDVTLEYYVNDAGRQMNILAVSVWLRYLELAGEPIVFPANGYKGQYVYEIAQEIWSEQGNQFVHPWISVVENLPADEPEGGDKETYIDAIIARAQSLLGKDGFANFHQHALKTVLDDIKDDLQAFGVRFDSWFSEQSLFEDGSIEKGIQALKDRGHTYEREGALWFRATDFGDEKDRVLVRANGQTTYFASDVAYHWNKYDRGFDRVIDIFGADHHGYVTRIKTAVKALGHDESALDVILVQFAILYRGGDRVQMSTRSGSFVTLRELREEVGNDAARYFYVARKPEQHMDFDLDLAKSESSDNPVYYIQYAHARICSVLRQLKERGLKWDKDMGLKNLDLLEQQHEATLISLIARYPEVIQSAAASCEPHQLAYYLRELANGLHSYYNAIQLLCEQEQLRCARLCLLESVRQVLNNGLAILGVSAPESM.

Residues 131 to 141 (ANPTGPLHVGH) carry the 'HIGH' region motif.

This sequence belongs to the class-I aminoacyl-tRNA synthetase family. In terms of assembly, monomer.

Its subcellular location is the cytoplasm. It carries out the reaction tRNA(Arg) + L-arginine + ATP = L-arginyl-tRNA(Arg) + AMP + diphosphate. The sequence is that of Arginine--tRNA ligase from Legionella pneumophila subsp. pneumophila (strain Philadelphia 1 / ATCC 33152 / DSM 7513).